The primary structure comprises 61 residues: Large ribosomal subunit protein eL20 (61 aa).

It belongs to the eukaryotic ribosomal protein eL20 family. In terms of assembly, part of the 50S ribosomal subunit. Binds 23S rRNA.

The sequence is that of Large ribosomal subunit protein eL20 from Methanosarcina mazei (strain ATCC BAA-159 / DSM 3647 / Goe1 / Go1 / JCM 11833 / OCM 88) (Methanosarcina frisia).